A 47-amino-acid polypeptide reads, in one-letter code: Defensin-like protein 1 (47 aa).

4 cysteine pairs are disulfide-bonded: Cys3-Cys47, Cys14-Cys36, Cys20-Cys41, and Cys24-Cys43.

This sequence belongs to the DEFL family. Protease inhibitor I18 (RTI/MTI-2) subfamily.

This chain is Defensin-like protein 1, found in Sorghum bicolor (Sorghum).